The following is a 238-amino-acid chain: 7-cyano-7-deazaguanine synthase (238 aa).

14-24 contributes to the ATP binding site; it reads FSGGQDSATCL. The Zn(2+) site is built by Cys-202, Cys-217, Cys-220, and Cys-223.

Belongs to the QueC family. Zn(2+) is required as a cofactor.

The catalysed reaction is 7-carboxy-7-deazaguanine + NH4(+) + ATP = 7-cyano-7-deazaguanine + ADP + phosphate + H2O + H(+). It functions in the pathway purine metabolism; 7-cyano-7-deazaguanine biosynthesis. Functionally, catalyzes the ATP-dependent conversion of 7-carboxy-7-deazaguanine (CDG) to 7-cyano-7-deazaguanine (preQ(0)). The polypeptide is 7-cyano-7-deazaguanine synthase (Nitrobacter hamburgensis (strain DSM 10229 / NCIMB 13809 / X14)).